Here is a 444-residue protein sequence, read N- to C-terminus: Docking protein 3 (444 aa).

The 117-residue stretch at 7-123 (PVKDGLLYQQ…WMDPICQLAF (117 aa)) folds into the PH domain. Residues 47-66 (DVRDGGLGPGGDRPAGPGRR) form a disordered region. Serine 138 is subject to Phosphoserine. In terms of domain architecture, IRS-type PTB spans 157–261 (EVAEFPVVVQ…ARQRERLPEL (105 aa)). Phosphoserine occurs at positions 274, 308, and 314. Tyrosine 325 is modified (phosphotyrosine). Residues 354-390 (GLSNGGPEAQEGPPGGRSPLGSPIYHNSEELSWPGSA) are disordered. Positions 358-376 (GGPEAQEGPPGGRSPLGSP) are enriched in low complexity. Serine 371 bears the Phosphoserine mark.

This sequence belongs to the DOK family. Type A subfamily. As to quaternary structure, on tyrosine phosphorylation, interacts with CSK and INPP5D/SHIP1 via their SH2 domains. Binds ABL1 through the PTB domain and in a kinase-dependent manner. Does not interact with RasGAP. Post-translationally, constitutively tyrosine-phosphorylated. On IL2 stimulation, phosphorylated on C-terminal tyrosine residues possibly by Src kinases. Can also be phosphorylated by ABL1 kinase.

Its subcellular location is the cytoplasm. The protein resides in the cell membrane. In terms of biological role, DOK proteins are enzymatically inert adaptor or scaffolding proteins. They provide a docking platform for the assembly of multimolecular signaling complexes. DOK3 is a negative regulator of JNK signaling in B-cells through interaction with INPP5D/SHIP1. May modulate ABL1 function. This Rattus norvegicus (Rat) protein is Docking protein 3 (Dok3).